The following is a 334-amino-acid chain: tRNA U34 carboxymethyltransferase (334 aa).

Carboxy-S-adenosyl-L-methionine contacts are provided by residues lysine 91, tryptophan 105, lysine 110, glycine 130, 152–154 (DPT), 181–182 (IE), methionine 196, tyrosine 200, and arginine 315.

Belongs to the class I-like SAM-binding methyltransferase superfamily. CmoB family. Homotetramer.

It catalyses the reaction carboxy-S-adenosyl-L-methionine + 5-hydroxyuridine(34) in tRNA = 5-carboxymethoxyuridine(34) in tRNA + S-adenosyl-L-homocysteine + H(+). Functionally, catalyzes carboxymethyl transfer from carboxy-S-adenosyl-L-methionine (Cx-SAM) to 5-hydroxyuridine (ho5U) to form 5-carboxymethoxyuridine (cmo5U) at position 34 in tRNAs. The chain is tRNA U34 carboxymethyltransferase from Klebsiella pneumoniae subsp. pneumoniae (strain ATCC 700721 / MGH 78578).